A 254-amino-acid chain; its full sequence is MNRRHRIYEGKAKILYEGPEPGTYIQFFKDDATAFNAKKHEIIDGKGVLNNRISEHIFSHLGRLGIPTHFIKRINMREQLIKAVEIIPLEVVVRNVAAGSLSKRLGLEEGTPLSQSIIEFYYKNDSLDDPMVSEEHITAFGWAVPQEIEDIMQLSIRINDFLSGLFAGVNIQLIDFKMEFGRLWEDEAMRIVLADEISPDSARLWDIQTQEKMDKDRFRRDMGGLINAYQEVAKRLGIINENEPSRPNGPVLVK.

It belongs to the SAICAR synthetase family.

It carries out the reaction 5-amino-1-(5-phospho-D-ribosyl)imidazole-4-carboxylate + L-aspartate + ATP = (2S)-2-[5-amino-1-(5-phospho-beta-D-ribosyl)imidazole-4-carboxamido]succinate + ADP + phosphate + 2 H(+). It participates in purine metabolism; IMP biosynthesis via de novo pathway; 5-amino-1-(5-phospho-D-ribosyl)imidazole-4-carboxamide from 5-amino-1-(5-phospho-D-ribosyl)imidazole-4-carboxylate: step 1/2. The chain is Phosphoribosylaminoimidazole-succinocarboxamide synthase from Bartonella henselae (strain ATCC 49882 / DSM 28221 / CCUG 30454 / Houston 1) (Rochalimaea henselae).